A 104-amino-acid polypeptide reads, in one-letter code: Putative zinc finger protein ORF104b (104 aa).

The segment at 62–85 (YECKYCHTRYLSHTGIVYHLEREH) adopts a C2H2-type zinc-finger fold.

The chain is Putative zinc finger protein ORF104b from Acidianus sp. F28 (AFV-2).